Reading from the N-terminus, the 233-residue chain is Cobalt-containing nitrile hydratase subunit beta (233 aa).

Belongs to the nitrile hydratase subunit beta family. In terms of assembly, heterotetramer of two alpha and two beta chains.

It catalyses the reaction an aliphatic primary amide = an aliphatic nitrile + H2O. In terms of biological role, NHase catalyzes the hydration of various nitrile compounds to the corresponding amides. The chain is Cobalt-containing nitrile hydratase subunit beta from Pseudonocardia thermophila.